Consider the following 93-residue polypeptide: Co-chaperonin GroES (93 aa).

The protein belongs to the GroES chaperonin family. Heptamer of 7 subunits arranged in a ring. Interacts with the chaperonin GroEL.

The protein localises to the cytoplasm. In terms of biological role, together with the chaperonin GroEL, plays an essential role in assisting protein folding. The GroEL-GroES system forms a nano-cage that allows encapsulation of the non-native substrate proteins and provides a physical environment optimized to promote and accelerate protein folding. GroES binds to the apical surface of the GroEL ring, thereby capping the opening of the GroEL channel. The protein is Co-chaperonin GroES of Streptococcus sanguinis.